The sequence spans 64 residues: MFLRYFLDENQQRVYTLKRTAPSGEQTLTAHPARFSPEDKNSKYRIIIKKRFGLLPTQKAKTVC.

The protein belongs to the NOP10 family. In terms of assembly, component of the small nucleolar ribonucleoprotein particles containing H/ACA-type snoRNAs (H/ACA snoRNPs).

It is found in the nucleus. The protein localises to the nucleolus. Functionally, required for ribosome biogenesis. Part of a complex which catalyzes pseudouridylation of rRNA. This involves the isomerization of uridine such that the ribose is subsequently attached to C5, instead of the normal N1. Pseudouridine ('psi') residues may serve to stabilize the conformation of rRNAs. This chain is Putative H/ACA ribonucleoprotein complex subunit 3 (nola-3), found in Caenorhabditis elegans.